The sequence spans 545 residues: Thermosome subunit beta (545 aa).

This sequence belongs to the TCP-1 chaperonin family. As to quaternary structure, forms a Heterooligomeric complex of two stacked eight-membered rings.

Functionally, molecular chaperone; binds unfolded polypeptides in vitro, and has a weak ATPase activity. This chain is Thermosome subunit beta (thsB), found in Thermococcus sp. (strain KS-8).